Consider the following 96-residue polypeptide: Small ribosomal subunit protein bS18 (96 aa).

It belongs to the bacterial ribosomal protein bS18 family. Part of the 30S ribosomal subunit. Forms a tight heterodimer with protein bS6.

Its function is as follows. Binds as a heterodimer with protein bS6 to the central domain of the 16S rRNA, where it helps stabilize the platform of the 30S subunit. The protein is Small ribosomal subunit protein bS18 of Gluconobacter oxydans (strain 621H) (Gluconobacter suboxydans).